A 632-amino-acid chain; its full sequence is Acyl-coenzyme A oxidase-like protein (632 aa).

376 to 381 lines the FAD pocket; sequence TGGMGY.

This sequence belongs to the acyl-CoA oxidase family. FAD serves as cofactor.

The sequence is that of Acyl-coenzyme A oxidase-like protein (Acoxl) from Mus musculus (Mouse).